Here is a 212-residue protein sequence, read N- to C-terminus: Leucyl/phenylalanyl-tRNA--protein transferase (212 aa).

This sequence belongs to the L/F-transferase family.

The protein resides in the cytoplasm. It catalyses the reaction N-terminal L-lysyl-[protein] + L-leucyl-tRNA(Leu) = N-terminal L-leucyl-L-lysyl-[protein] + tRNA(Leu) + H(+). The enzyme catalyses N-terminal L-arginyl-[protein] + L-leucyl-tRNA(Leu) = N-terminal L-leucyl-L-arginyl-[protein] + tRNA(Leu) + H(+). It carries out the reaction L-phenylalanyl-tRNA(Phe) + an N-terminal L-alpha-aminoacyl-[protein] = an N-terminal L-phenylalanyl-L-alpha-aminoacyl-[protein] + tRNA(Phe). In terms of biological role, functions in the N-end rule pathway of protein degradation where it conjugates Leu, Phe and, less efficiently, Met from aminoacyl-tRNAs to the N-termini of proteins containing an N-terminal arginine or lysine. The polypeptide is Leucyl/phenylalanyl-tRNA--protein transferase (Jannaschia sp. (strain CCS1)).